Consider the following 333-residue polypeptide: 4-hydroxyproline epimerase (333 aa).

The Proton acceptor role is filled by C90. Substrate is bound by residues 91 to 92 and D249; that span reads GH. C253 functions as the Proton donor in the catalytic mechanism. Substrate is bound at residue 254 to 255; that stretch reads GT.

Belongs to the proline racemase family. Homodimer.

The catalysed reaction is trans-4-hydroxy-L-proline = cis-4-hydroxy-D-proline. Its activity is regulated as follows. Inhibited by iodoacetate, iodoacetamide and by high amounts (10 mM) of pyrrole-2-carboxylic acid (PYC). Not inhibited by PYC at 1 mM. Functionally, allows intracellular utilization of 4-hydroxyproline, one of the major constituents of host collagen, by converting 4-hydroxy-L-proline to 4-hydroxy-D-proline, which can be further metabolized by intracellular 4-hydroxy-D-proline oxidases. Strong B-cell mitogen. Plays an important role in the regulation of intra- and extracellular amino acid pools, allowing the bacterium to profit from host precursors and enzymatic pathways. This chain is 4-hydroxyproline epimerase, found in Brucella melitensis biotype 1 (strain ATCC 23456 / CCUG 17765 / NCTC 10094 / 16M).